A 442-amino-acid chain; its full sequence is ATP-dependent protease ATPase subunit HslU (442 aa).

Residues Ile-18, Gly-60–Glu-65, Asp-255, Glu-320, and Arg-392 contribute to the ATP site.

It belongs to the ClpX chaperone family. HslU subfamily. In terms of assembly, a double ring-shaped homohexamer of HslV is capped on each side by a ring-shaped HslU homohexamer. The assembly of the HslU/HslV complex is dependent on binding of ATP.

The protein resides in the cytoplasm. Functionally, ATPase subunit of a proteasome-like degradation complex; this subunit has chaperone activity. The binding of ATP and its subsequent hydrolysis by HslU are essential for unfolding of protein substrates subsequently hydrolyzed by HslV. HslU recognizes the N-terminal part of its protein substrates and unfolds these before they are guided to HslV for hydrolysis. The protein is ATP-dependent protease ATPase subunit HslU of Hahella chejuensis (strain KCTC 2396).